A 448-amino-acid chain; its full sequence is MSTAKDPGNGVYEILSLIFDFPSNEQRLWWHSTAPMFAAMLDNAGYNIHDQYRHLGIFKKHIIPFLGVYPTKDKERWLSILTRCGLPLELSLNCTDSVVRYTYEPINEVTGTEKDPFNTLAIMASVQKLAQIQAGIDLEWFSYFKDELTLDESESATLQSNELVKEQIKTQNKLALDLKESQFALKVYFYPHLKSIATGKSTHDLIFDSVFKLSQKHDSIQPAFQVLCDYVSRRNHSAESDQHIALHARLLSCDLIDPAKSRVKIYLLEKTVSLSVMEDLWTLGGQRVDASTMDGLDMLRELWSLLKVPTGHLEYPKGYLELGEIPNEQLPSMANYTLHHNNPMPEPQVYFTVFGMNDAEISNALTIFFQRHGFDDMAKKYRVFLQDSYPYHDFESLNYLHAYISFSYRRNKPYLSVYLHTFETGRWPVVADSPISFDAYRRCDLSTK.

Residues 80–81 (IL) and Glu89 each bind L-tryptophan. Residues Arg100, Lys186, and Tyr188 each contribute to the substrate site. Tyr190 and Arg249 together coordinate L-tryptophan. 7 residues coordinate substrate: Arg262, Lys264, Tyr266, Gln348, Tyr350, Tyr414, and Tyr418.

This sequence belongs to the tryptophan dimethylallyltransferase family. Homodimer.

The catalysed reaction is L-tryptophan + dimethylallyl diphosphate = 4-(3-methylbut-2-enyl)-L-tryptophan + diphosphate. It participates in alkaloid biosynthesis; ergot alkaloid biosynthesis. Tryptophan dimethylallyltransferase; part of the gene cluster that mediates the biosynthesis of fungal ergot alkaloid. DmaW catalyzes the first step of ergot alkaloid biosynthesis by condensing dimethylallyl diphosphate (DMAP) and tryptophan to form 4-dimethylallyl-L-tryptophan. The second step is catalyzed by the methyltransferase easF that methylates 4-dimethylallyl-L-tryptophan in the presence of S-adenosyl-L-methionine, resulting in the formation of 4-dimethylallyl-L-abrine. The catalase easC and the FAD-dependent oxidoreductase easE then transform 4-dimethylallyl-L-abrine to chanoclavine-I which is further oxidized by easD in the presence of NAD(+), resulting in the formation of chanoclavine-I aldehyde. Agroclavine dehydrogenase easG then mediates the conversion of chanoclavine-I aldehyde to agroclavine via a non-enzymatic adduct reaction: the substrate is an iminium intermediate that is formed spontaneously from chanoclavine-I aldehyde in the presence of glutathione. The presence of easA is not required to complete this reaction. Further conversion of agroclavine to paspalic acid is a two-step process involving oxidation of agroclavine to elymoclavine and of elymoclavine to paspalic acid, the second step being performed by the elymoclavine oxidase cloA. Paspalic acid is then further converted to D-lysergic acid. Ergopeptines are assembled from D-lysergic acid and three different amino acids by the D-lysergyl-peptide-synthetases composed each of a monomudular and a trimodular nonribosomal peptide synthetase subunit. LpsB and lpsC encode the monomodular subunits responsible for D-lysergic acid activation and incorporation into the ergopeptine backbone. LpsA1 and A2 subunits encode the trimodular nonribosomal peptide synthetase assembling the tripeptide portion of ergopeptines. LpsA1 is responsible for formation of the major ergopeptine, ergotamine, and lpsA2 for alpha-ergocryptine, the minor ergopeptine of the total alkaloid mixture elaborated by C.purpurea. D-lysergyl-tripeptides are assembled by the nonribosomal peptide synthetases and released as N-(D-lysergyl-aminoacyl)-lactams. Cyclolization of the D-lysergyl-tripeptides is performed by the Fe(2+)/2-ketoglutarate-dependent dioxygenase easH which introduces a hydroxyl group into N-(D-lysergyl-aminoacyl)-lactam at alpha-C of the aminoacyl residue followed by spontaneous condensation with the terminal lactam carbonyl group. The chain is Tryptophan dimethylallyltransferase 1 from Claviceps purpurea (strain 20.1) (Ergot fungus).